We begin with the raw amino-acid sequence, 141 residues long: ATP synthase epsilon chain (141 aa).

This sequence belongs to the ATPase epsilon chain family. In terms of assembly, F-type ATPases have 2 components, CF(1) - the catalytic core - and CF(0) - the membrane proton channel. CF(1) has five subunits: alpha(3), beta(3), gamma(1), delta(1), epsilon(1). CF(0) has three main subunits: a, b and c.

The protein localises to the cell membrane. Produces ATP from ADP in the presence of a proton gradient across the membrane. This chain is ATP synthase epsilon chain, found in Lactococcus lactis subsp. lactis (strain IL1403) (Streptococcus lactis).